Consider the following 20-residue polypeptide: Blooming-related protein 2 (20 aa).

The disordered stretch occupies residues 1 to 20 (VSAEYLERQGPKDDXDCFDD).

Functionally, possible 'checkpoint' protein for cell division in the blooming process. In Prorocentrum triestinum (Red tide alga), this protein is Blooming-related protein 2.